Here is a 181-residue protein sequence, read N- to C-terminus: ATP-dependent protease subunit HslV (181 aa).

T5 is an active-site residue. 3 residues coordinate Na(+): A161, C164, and T167.

Belongs to the peptidase T1B family. HslV subfamily. As to quaternary structure, a double ring-shaped homohexamer of HslV is capped on each side by a ring-shaped HslU homohexamer. The assembly of the HslU/HslV complex is dependent on binding of ATP.

The protein localises to the cytoplasm. The enzyme catalyses ATP-dependent cleavage of peptide bonds with broad specificity.. Its activity is regulated as follows. Allosterically activated by HslU binding. In terms of biological role, protease subunit of a proteasome-like degradation complex believed to be a general protein degrading machinery. The protein is ATP-dependent protease subunit HslV of Sulfurimonas denitrificans (strain ATCC 33889 / DSM 1251) (Thiomicrospira denitrificans (strain ATCC 33889 / DSM 1251)).